Consider the following 309-residue polypeptide: tRNA pseudouridine synthase B (309 aa).

The active-site Nucleophile is Asp-40.

The protein belongs to the pseudouridine synthase TruB family. Type 1 subfamily.

The catalysed reaction is uridine(55) in tRNA = pseudouridine(55) in tRNA. Functionally, responsible for synthesis of pseudouridine from uracil-55 in the psi GC loop of transfer RNAs. The sequence is that of tRNA pseudouridine synthase B from Mycobacterium avium (strain 104).